Reading from the N-terminus, the 243-residue chain is Carboxy-S-adenosyl-L-methionine synthase (243 aa).

S-adenosyl-L-methionine-binding positions include Tyr-40, 65 to 67 (GCS), 90 to 91 (DN), 118 to 119 (DI), Asn-133, and Arg-200.

Belongs to the class I-like SAM-binding methyltransferase superfamily. Cx-SAM synthase family. In terms of assembly, homodimer.

The enzyme catalyses prephenate + S-adenosyl-L-methionine = carboxy-S-adenosyl-L-methionine + 3-phenylpyruvate + H2O. Catalyzes the conversion of S-adenosyl-L-methionine (SAM) to carboxy-S-adenosyl-L-methionine (Cx-SAM). The sequence is that of Carboxy-S-adenosyl-L-methionine synthase from Shewanella putrefaciens (strain CN-32 / ATCC BAA-453).